The primary structure comprises 100 residues: Urease subunit gamma (100 aa).

It belongs to the urease gamma subunit family. In terms of assembly, heterotrimer of UreA (gamma), UreB (beta) and UreC (alpha) subunits. Three heterotrimers associate to form the active enzyme.

The protein resides in the cytoplasm. It carries out the reaction urea + 2 H2O + H(+) = hydrogencarbonate + 2 NH4(+). Its pathway is nitrogen metabolism; urea degradation; CO(2) and NH(3) from urea (urease route): step 1/1. The chain is Urease subunit gamma from Streptomyces griseus subsp. griseus (strain JCM 4626 / CBS 651.72 / NBRC 13350 / KCC S-0626 / ISP 5235).